The sequence spans 677 residues: Probable potassium transport system protein Kup (677 aa).

The next 12 helical transmembrane spans lie at 13–33, 54–74, 98–118, 137–157, 171–191, 217–237, 249–269, 296–316, 345–365, 374–394, 402–422, and 429–449; these read GALI…LYTM, VSLV…IIAL, WLLL…TLTP, FIFP…LLIV, IFGP…LVNI, TGIF…ALYS, VSWI…GAWI, IFGV…LISG, MYIG…VWAF, AYGL…YQFI, ILAF…LIAS, and GGYA…IWFY.

It belongs to the HAK/KUP transporter (TC 2.A.72) family.

It is found in the cell membrane. It carries out the reaction K(+)(in) + H(+)(in) = K(+)(out) + H(+)(out). Its function is as follows. Transport of potassium into the cell. Likely operates as a K(+):H(+) symporter. The protein is Probable potassium transport system protein Kup of Leuconostoc mesenteroides subsp. mesenteroides (strain ATCC 8293 / DSM 20343 / BCRC 11652 / CCM 1803 / JCM 6124 / NCDO 523 / NBRC 100496 / NCIMB 8023 / NCTC 12954 / NRRL B-1118 / 37Y).